The sequence spans 315 residues: Prephenate dehydratase (315 aa).

One can recognise a Prephenate dehydratase domain in the interval R3–R190. The ACT domain occupies S204–P281.

As to quaternary structure, homodimer.

It carries out the reaction prephenate + H(+) = 3-phenylpyruvate + CO2 + H2O. It functions in the pathway amino-acid biosynthesis; L-phenylalanine biosynthesis; phenylpyruvate from prephenate: step 1/1. The polypeptide is Prephenate dehydratase (pheA) (Mycobacterium sp. (strain KMS)).